Reading from the N-terminus, the 117-residue chain is DNA-directed RNA polymerase subunit omega (117 aa).

Residues 96 to 105 (KEEAEEEAKQ) are compositionally biased toward basic and acidic residues. The segment at 96–117 (KEEAEEEAKQKNSRAAKAAAAE) is disordered. A compositionally biased stretch (low complexity) spans 108–117 (SRAAKAAAAE).

The protein belongs to the RNA polymerase subunit omega family. In terms of assembly, the RNAP catalytic core consists of 2 alpha, 1 beta, 1 beta' and 1 omega subunit. When a sigma factor is associated with the core the holoenzyme is formed, which can initiate transcription.

The catalysed reaction is RNA(n) + a ribonucleoside 5'-triphosphate = RNA(n+1) + diphosphate. In terms of biological role, promotes RNA polymerase assembly. Latches the N- and C-terminal regions of the beta' subunit thereby facilitating its interaction with the beta and alpha subunits. The chain is DNA-directed RNA polymerase subunit omega from Lactococcus lactis subsp. cremoris (strain SK11).